Here is a 524-residue protein sequence, read N- to C-terminus: Beta-glucosidase 21 (524 aa).

The first 24 residues, 1 to 24 (MALQKFPLMGLLLLLTILVSVTTA), serve as a signal peptide directing secretion. Glutamine 55 provides a ligand contact to a beta-D-glucoside. Asparagine 61 carries an N-linked (GlcNAc...) asparagine glycan. Residues histidine 158 and 203–204 (NE) contribute to the a beta-D-glucoside site. The active-site Proton donor is the glutamate 204. Cysteine 223 and cysteine 230 are oxidised to a cystine. A beta-D-glucoside contacts are provided by residues tyrosine 346, glutamate 418, tryptophan 468, 475–476 (EW), and phenylalanine 484. Catalysis depends on glutamate 418, which acts as the Nucleophile. Asparagine 494 carries an N-linked (GlcNAc...) asparagine glycan. Positions 521–524 (RDEL) match the Prevents secretion from ER motif.

It belongs to the glycosyl hydrolase 1 family. In terms of assembly, component of the PYK10 complex, at least composed of PYK10/BGLU23, BGLU21, BGLU22, JAL22, JAL23, PBP1/JAL30, PBP2/JAL31, JAL32, JAL33, JAL34, JAL35, GLL22 and GLL23. As to expression, expressed exclusively in roots.

It localises to the endoplasmic reticulum lumen. The catalysed reaction is Hydrolysis of terminal, non-reducing beta-D-glucosyl residues with release of beta-D-glucose.. Its activity is regulated as follows. Activated upon binding to PBP1 or PBP2. Its function is as follows. Beta-D-glucosidase active on scopolin &gt;&gt; esculin &gt;&gt; 4-MU-glucoside &gt; DIMBOA-glucoside. No activity with pNP-glucoside, oNP-glucoside and sinigrin as substrates. This Arabidopsis thaliana (Mouse-ear cress) protein is Beta-glucosidase 21.